The chain runs to 555 residues: Potassium-transporting ATPase potassium-binding subunit (555 aa).

The next 10 helical transmembrane spans lie at 2-22 (IWVA…PTGI), 60-80 (QYAL…YFIF), 130-150 (IGIT…VMAF), 173-193 (VFLP…VPQT), 246-266 (MSNI…PFTY), 278-298 (ILFV…TTSE), 374-394 (AGFV…GLMV), 412-432 (LIAV…ALAL), 483-503 (LVMF…AASL), and 525-545 (GIFI…MLVL).

It belongs to the KdpA family. As to quaternary structure, the system is composed of three essential subunits: KdpA, KdpB and KdpC.

Its subcellular location is the cell membrane. Part of the high-affinity ATP-driven potassium transport (or Kdp) system, which catalyzes the hydrolysis of ATP coupled with the electrogenic transport of potassium into the cytoplasm. This subunit binds the extracellular potassium ions and delivers the ions to the membrane domain of KdpB through an intramembrane tunnel. The sequence is that of Potassium-transporting ATPase potassium-binding subunit from Bacillus thuringiensis (strain Al Hakam).